A 130-amino-acid chain; its full sequence is Large ribosomal subunit protein uL22 (130 aa).

Belongs to the universal ribosomal protein uL22 family. In terms of assembly, part of the 50S ribosomal subunit.

In terms of biological role, this protein binds specifically to 23S rRNA; its binding is stimulated by other ribosomal proteins, e.g. L4, L17, and L20. It is important during the early stages of 50S assembly. It makes multiple contacts with different domains of the 23S rRNA in the assembled 50S subunit and ribosome. Functionally, the globular domain of the protein is located near the polypeptide exit tunnel on the outside of the subunit, while an extended beta-hairpin is found that lines the wall of the exit tunnel in the center of the 70S ribosome. In Clavibacter sepedonicus (Clavibacter michiganensis subsp. sepedonicus), this protein is Large ribosomal subunit protein uL22.